A 285-amino-acid chain; its full sequence is Phosphatidate cytidylyltransferase (285 aa).

The next 8 membrane-spanning stretches (helical) occupy residues 10-30 (FVLI…GFAI), 56-76 (VWLA…LPEY), 93-113 (LGWW…AAIW), 121-141 (LIFG…LRAW), 151-171 (AIWL…AYMF), 190-210 (WQGF…YGMW), 213-233 (LDVA…ASVL), and 264-284 (IDSL…VFRT).

Belongs to the CDS family.

It is found in the cell inner membrane. It carries out the reaction a 1,2-diacyl-sn-glycero-3-phosphate + CTP + H(+) = a CDP-1,2-diacyl-sn-glycerol + diphosphate. The protein operates within phospholipid metabolism; CDP-diacylglycerol biosynthesis; CDP-diacylglycerol from sn-glycerol 3-phosphate: step 3/3. This Escherichia coli O157:H7 protein is Phosphatidate cytidylyltransferase (cdsA).